The chain runs to 200 residues: MAKVLVLYYSSYGHVETMAQHIVEGAKSVPGVEVTLKRVPETIPVDQARAIGVKVDQAAPVATVDELADYDAIIFGTPTRFGNMAGQMRTFLDQTGGLWMKGALVGKIGSVFASTGTQHGGQETTITSFHTTLLHHGMVIVGVPYACSGLVNMSEITGGTPYGATTLAGADGSRQPSANELDIARYQGKHVAELASKLAS.

The 188-residue stretch at 4–191 (VLVLYYSSYG…DIARYQGKHV (188 aa)) folds into the Flavodoxin-like domain. Residues 10–15 (SSYGHV) and 79–81 (TRF) each bind FMN. Tyr-12 contributes to the NAD(+) binding site. Trp-99 contacts substrate. FMN-binding positions include 114–120 (STGTQHG) and His-135.

This sequence belongs to the WrbA family. Requires FMN as cofactor.

The catalysed reaction is a quinone + NADH + H(+) = a quinol + NAD(+). It carries out the reaction a quinone + NADPH + H(+) = a quinol + NADP(+). The polypeptide is NAD(P)H dehydrogenase (quinone) (Burkholderia cenocepacia (strain HI2424)).